Consider the following 1215-residue polypeptide: DNA-directed RNA polymerase subunit beta' (1215 aa).

Residues C60, C62, C75, and C78 each coordinate Zn(2+). Residues D450, D452, and D454 each coordinate Mg(2+). C818, C892, C899, and C902 together coordinate Zn(2+).

This sequence belongs to the RNA polymerase beta' chain family. The RNAP catalytic core consists of 2 alpha, 1 beta, 1 beta' and 1 omega subunit. When a sigma factor is associated with the core the holoenzyme is formed, which can initiate transcription. It depends on Mg(2+) as a cofactor. Zn(2+) serves as cofactor.

It carries out the reaction RNA(n) + a ribonucleoside 5'-triphosphate = RNA(n+1) + diphosphate. In terms of biological role, DNA-dependent RNA polymerase catalyzes the transcription of DNA into RNA using the four ribonucleoside triphosphates as substrates. The chain is DNA-directed RNA polymerase subunit beta' from Streptococcus suis (strain 98HAH33).